We begin with the raw amino-acid sequence, 311 residues long: MTASTPSNVMTLFLLRHGQSELNHENIFCGWIDAKLTEKGKEQARHSAELIEQYCKANNLRLPQIGYTSRLIRTQQTIETMCEEFKLKPQLQVVYDFNKIKLGDEFGSDDKDNMKIPILQTWRLNERHYGSWQGQRKPNVLKEYGKDKYMFIRRDYEGKPPPVDLDREMIQQENEKGSSTGYEFKEPNRQIKYELECSNHDIVLPDSESLREVVYRLNPFLQNVILKLANQYDESSCLIVGHGSSVRSLLKILEGISDDDIKNVDIPNGIPLVVELDKNNGLKFIRKFYLDPESAKINAEKVRNEGFIKNP.

Substrate is bound by residues 16–23 (RHGQSELN), 29–30 (CG), Arg73, 126–129 (ERHY), Lys137, 153–154 (RR), and 243–244 (GS). The active-site Tele-phosphohistidine intermediate is His17. Glu126 functions as the Proton donor/acceptor in the catalytic mechanism.

Belongs to the phosphoglycerate mutase family. BPG-dependent PGAM subfamily.

The protein resides in the cytoplasm. The enzyme catalyses (2R)-2-phosphoglycerate = (2R)-3-phosphoglycerate. It participates in carbohydrate degradation; glycolysis; pyruvate from D-glyceraldehyde 3-phosphate: step 3/5. Functionally, could be non-functional. This Saccharomyces cerevisiae (strain ATCC 204508 / S288c) (Baker's yeast) protein is Phosphoglycerate mutase 2 (GPM2).